The sequence spans 186 residues: Transcription factor HES-3 (186 aa).

The 49-residue stretch at 1–49 folds into the bHLH domain; the sequence is MEKKRRARINVSLEQLKSLLEKHYSHQIRKRKLEKADILELSVKYMRSL. Positions 65-99 constitute an Orange domain; it reads QPSGFRSCLPGVSQLLRRGDEVGSGLRCPLVPESA. The disordered stretch occupies residues 128–186; that stretch reads APAAGGPRSPPPLLLLPESLPGSSASVPPPQPASSRCAESPGLGLRVWRPWGSPGDDLN. Residues 142–153 show a composition bias toward low complexity; that stretch reads LLPESLPGSSAS. Residues 175–178 carry the WRPW motif motif; it reads WRPW.

Transcription repression requires formation of a complex with a corepressor protein of the Groucho/TLE family.

It is found in the nucleus. In terms of biological role, transcriptional repressor of genes that require a bHLH protein for their transcription. This is Transcription factor HES-3 (HES3) from Homo sapiens (Human).